Here is a 241-residue protein sequence, read N- to C-terminus: Proteasome subunit alpha (241 aa).

Belongs to the peptidase T1A family. In terms of assembly, the 20S proteasome core is composed of 14 alpha and 14 beta subunits that assemble into four stacked heptameric rings, resulting in a barrel-shaped structure. The two inner rings, each composed of seven catalytic beta subunits, are sandwiched by two outer rings, each composed of seven alpha subunits. The catalytic chamber with the active sites is on the inside of the barrel. Has a gated structure, the ends of the cylinder being occluded by the N-termini of the alpha-subunits. Is capped at one or both ends by the proteasome regulatory ATPase, PAN.

The protein resides in the cytoplasm. The formation of the proteasomal ATPase PAN-20S proteasome complex, via the docking of the C-termini of PAN into the intersubunit pockets in the alpha-rings, triggers opening of the gate for substrate entry. Interconversion between the open-gate and close-gate conformations leads to a dynamic regulation of the 20S proteasome proteolysis activity. Functionally, component of the proteasome core, a large protease complex with broad specificity involved in protein degradation. This chain is Proteasome subunit alpha, found in Saccharolobus islandicus (strain M.16.4 / Kamchatka #3) (Sulfolobus islandicus).